Consider the following 1414-residue polypeptide: DNA-directed RNA polymerase subunit beta' (1414 aa).

Zn(2+) contacts are provided by Cys-70, Cys-72, Cys-85, and Cys-88. Residues Asp-460, Asp-462, and Asp-464 each contribute to the Mg(2+) site. Residues Cys-814, Cys-888, Cys-895, and Cys-898 each contribute to the Zn(2+) site. The disordered stretch occupies residues 1378-1414 (EREAARQLANPFEDAPVTVGGEPEAPAADTPSDDSAE).

It belongs to the RNA polymerase beta' chain family. As to quaternary structure, the RNAP catalytic core consists of 2 alpha, 1 beta, 1 beta' and 1 omega subunit. When a sigma factor is associated with the core the holoenzyme is formed, which can initiate transcription. Mg(2+) is required as a cofactor. Requires Zn(2+) as cofactor.

It catalyses the reaction RNA(n) + a ribonucleoside 5'-triphosphate = RNA(n+1) + diphosphate. In terms of biological role, DNA-dependent RNA polymerase catalyzes the transcription of DNA into RNA using the four ribonucleoside triphosphates as substrates. The chain is DNA-directed RNA polymerase subunit beta' from Bordetella bronchiseptica (strain ATCC BAA-588 / NCTC 13252 / RB50) (Alcaligenes bronchisepticus).